The chain runs to 180 residues: NAD(P)H-quinone oxidoreductase subunit I, chloroplastic (180 aa).

4Fe-4S ferredoxin-type domains follow at residues 55 to 84 (GRIH…VDWR) and 95 to 124 (LNYS…MTEE). Positions 64, 67, 70, 74, 104, 107, 110, and 114 each coordinate [4Fe-4S] cluster.

This sequence belongs to the complex I 23 kDa subunit family. As to quaternary structure, NDH is composed of at least 16 different subunits, 5 of which are encoded in the nucleus. [4Fe-4S] cluster serves as cofactor.

The protein localises to the plastid. It is found in the chloroplast thylakoid membrane. The enzyme catalyses a plastoquinone + NADH + (n+1) H(+)(in) = a plastoquinol + NAD(+) + n H(+)(out). It catalyses the reaction a plastoquinone + NADPH + (n+1) H(+)(in) = a plastoquinol + NADP(+) + n H(+)(out). In terms of biological role, NDH shuttles electrons from NAD(P)H:plastoquinone, via FMN and iron-sulfur (Fe-S) centers, to quinones in the photosynthetic chain and possibly in a chloroplast respiratory chain. The immediate electron acceptor for the enzyme in this species is believed to be plastoquinone. Couples the redox reaction to proton translocation, and thus conserves the redox energy in a proton gradient. This chain is NAD(P)H-quinone oxidoreductase subunit I, chloroplastic, found in Hordeum vulgare (Barley).